A 194-amino-acid polypeptide reads, in one-letter code: A-type ATP synthase subunit E (194 aa).

The protein belongs to the V-ATPase E subunit family. In terms of assembly, has multiple subunits with at least A(3), B(3), C, D, E, F, H, I and proteolipid K(x).

The protein localises to the cell membrane. Functionally, component of the A-type ATP synthase that produces ATP from ADP in the presence of a proton gradient across the membrane. This is A-type ATP synthase subunit E from Haloferax volcanii (strain ATCC 29605 / DSM 3757 / JCM 8879 / NBRC 14742 / NCIMB 2012 / VKM B-1768 / DS2) (Halobacterium volcanii).